We begin with the raw amino-acid sequence, 426 residues long: tRNA (guanine(37)-N(1))-methyltransferase (426 aa).

S-adenosyl-L-methionine-binding positions include His-203, 242-243, 269-270, and Asn-292; these read DL and DA. The segment at 374-426 is disordered; it reads RISFKMPTLKKRKDTENNDDQENNNNSSNNNNNNKIDYNEAVSSGGEGKKIKH. Low complexity predominate over residues 396 to 407; sequence NNNNSSNNNNNN.

It belongs to the class I-like SAM-binding methyltransferase superfamily. TRM5/TYW2 family. In terms of assembly, monomer.

It is found in the mitochondrion matrix. It localises to the nucleus. Its subcellular location is the cytoplasm. It carries out the reaction guanosine(37) in tRNA + S-adenosyl-L-methionine = N(1)-methylguanosine(37) in tRNA + S-adenosyl-L-homocysteine + H(+). Specifically methylates the N1 position of guanosine-37 in various cytoplasmic and mitochondrial tRNAs. Methylation is not dependent on the nature of the nucleoside 5' of the target nucleoside. This is the first step in the biosynthesis of wybutosine (yW), a modified base adjacent to the anticodon of tRNAs and required for accurate decoding. This chain is tRNA (guanine(37)-N(1))-methyltransferase (trmt5), found in Heterostelium pallidum (strain ATCC 26659 / Pp 5 / PN500) (Cellular slime mold).